The sequence spans 431 residues: Histidinol dehydrogenase (431 aa).

3 residues coordinate NAD(+): Y127, Q189, and N212. Positions 237, 259, and 262 each coordinate substrate. Positions 259 and 262 each coordinate Zn(2+). Residues E326 and H327 each act as proton acceptor in the active site. Residues H327, D360, E414, and H419 each contribute to the substrate site. Zn(2+) is bound at residue D360. Residue H419 participates in Zn(2+) binding.

The protein belongs to the histidinol dehydrogenase family. The cofactor is Zn(2+).

It carries out the reaction L-histidinol + 2 NAD(+) + H2O = L-histidine + 2 NADH + 3 H(+). It functions in the pathway amino-acid biosynthesis; L-histidine biosynthesis; L-histidine from 5-phospho-alpha-D-ribose 1-diphosphate: step 9/9. In terms of biological role, catalyzes the sequential NAD-dependent oxidations of L-histidinol to L-histidinaldehyde and then to L-histidine. The chain is Histidinol dehydrogenase from Xanthomonas oryzae pv. oryzae (strain KACC10331 / KXO85).